We begin with the raw amino-acid sequence, 118 residues long: Large ribosomal subunit protein bL20 (118 aa).

The protein belongs to the bacterial ribosomal protein bL20 family.

Its function is as follows. Binds directly to 23S ribosomal RNA and is necessary for the in vitro assembly process of the 50S ribosomal subunit. It is not involved in the protein synthesizing functions of that subunit. The chain is Large ribosomal subunit protein bL20 from Agathobacter rectalis (strain ATCC 33656 / DSM 3377 / JCM 17463 / KCTC 5835 / VPI 0990) (Eubacterium rectale).